The chain runs to 218 residues: rRNA methyltransferase 2, mitochondrial (218 aa).

S-adenosyl-L-methionine-binding positions include 59–62 (PGSW), Asp-80, 96–97 (DI), and Asp-133. Lys-173 functions as the Proton acceptor in the catalytic mechanism.

It belongs to the class I-like SAM-binding methyltransferase superfamily. RNA methyltransferase RlmE family.

It is found in the mitochondrion. It carries out the reaction a uridine in 21S rRNA + S-adenosyl-L-methionine = a 2'-O-methyluridine in 21S rRNA + S-adenosyl-L-homocysteine + H(+). S-adenosyl-L-methionine-dependent 2'-O-ribose methyltransferase that catalyzes the formation of the 2'-O-methyluridine corresponding to position 2791 in S.cerevisiae 21S mitochondrial large subunit ribosomal RNA (mtLSU rRNA), a universally conserved modification in the peptidyl transferase domain of the mtLSU rRNA. The sequence is that of rRNA methyltransferase 2, mitochondrial from Schizosaccharomyces pombe (strain 972 / ATCC 24843) (Fission yeast).